A 550-amino-acid chain; its full sequence is MPTDVEIAQAHTLEPITDIANRAGVPSDALIPYGFTKAKIDINRIASENTGKLVLVTGISPTPAGEGKSTVLIGLSDAMRLRGHNSIVAIREPSLGPVMGIKGGAAGGGYSQIVPMEDINLHFTGDFHAITAANNTLAAMIDNHIHQGNTLGIDVRRITWQRCLDVNDRCLRKVVTGLGGKAHGVPTETGFTITAASEIMAILCLALDLTDLEARLARIVVGQTFSSEPVTVGQLNAQGALAALLRDAVNPNLVQTLGGTPALCHGGPFANIAHGCNSLIATKTALSLGDVVLTEAGFGSDLGAEKFFDIKSRVGDLNVAATVVVATVRSLKYNAGVPKDELTTENLEALASGVVNLERHVENIRAFGIEPIVALNKFASDTDAEINQLKAWAETMSVQLIPVEVWAHGGQGALELADAVAVSMQNQTSHHLYDPELGIEASLLTIAQKIYGAADVELSKQARQDLAYLQENGWDRLPVCISKTQYSFSDDPSQLGRPEGHTLHVRNLLPRIGAGFIVALTGDVMTMPGLPKKPAAENIGVENGEIKGLF.

62–69 (TPAGEGKS) is an ATP binding site.

The protein belongs to the formate--tetrahydrofolate ligase family.

It catalyses the reaction (6S)-5,6,7,8-tetrahydrofolate + formate + ATP = (6R)-10-formyltetrahydrofolate + ADP + phosphate. Its pathway is one-carbon metabolism; tetrahydrofolate interconversion. The chain is Formate--tetrahydrofolate ligase from Corynebacterium diphtheriae (strain ATCC 700971 / NCTC 13129 / Biotype gravis).